Reading from the N-terminus, the 277-residue chain is Large ribosomal subunit protein uL2 (277 aa).

The segment at 222 to 277 (GSVMNPNDHPHGGGEGKAPVGRKAPSTPWGKPALGLKTRNKKAKSDKLIVRRRNEK) is disordered. Residues 264 to 277 (AKSDKLIVRRRNEK) show a composition bias toward basic and acidic residues.

It belongs to the universal ribosomal protein uL2 family. Part of the 50S ribosomal subunit. Forms a bridge to the 30S subunit in the 70S ribosome.

In terms of biological role, one of the primary rRNA binding proteins. Required for association of the 30S and 50S subunits to form the 70S ribosome, for tRNA binding and peptide bond formation. It has been suggested to have peptidyltransferase activity; this is somewhat controversial. Makes several contacts with the 16S rRNA in the 70S ribosome. The sequence is that of Large ribosomal subunit protein uL2 from Streptococcus thermophilus (strain CNRZ 1066).